The primary structure comprises 331 residues: 6-phosphogluconolactonase (331 aa).

The protein belongs to the cycloisomerase 2 family.

The enzyme catalyses 6-phospho-D-glucono-1,5-lactone + H2O = 6-phospho-D-gluconate + H(+). It functions in the pathway carbohydrate degradation; pentose phosphate pathway; D-ribulose 5-phosphate from D-glucose 6-phosphate (oxidative stage): step 2/3. Functionally, catalyzes the hydrolysis of 6-phosphogluconolactone to 6-phosphogluconate. This chain is 6-phosphogluconolactonase, found in Salmonella paratyphi A (strain ATCC 9150 / SARB42).